A 269-amino-acid polypeptide reads, in one-letter code: ATP synthase subunit gamma, mitochondrial (269 aa).

F-type ATP synthases have 2 components, the catalytic core F(1) and the membrane-embedded component F(0), linked together by a central stalk and a peripheral stalk. The central stalk, also called rotor shaft, is often seen as part of F(1). The peripheral stalk is seen as part of F(0). F(0) contains the membrane channel next to the rotor. F-type ATP synthases form dimers but each monomer functions independently in ATP generation. The dimer consists of 18 different polypeptides: ATP1 (subunit alpha, part of F(1), 3 molecules per monomer), ATP2 (subunit beta, part of F(1), 3 molecules per monomer), ATP3 (subunit gamma, part of the central stalk), ATP4 (subunit b, part of the peripheral stalk), ATP5/OSCP (subunit 5/OSCP, part of the peripheral stalk), ATP6 (subunit a, part of the peripheral stalk), ATP7 (subunit d, part of the peripheral stalk), ATP8 (subunit 8, part of the peripheral stalk), OLI1 (subunit c, part of the rotor, 10 molecules per monomer), ATP14 (subunit h, part of the peripheral stalk), ATP15 (subunit epsilon, part of the central stalk), ATP16 (subunit delta, part of the central stalk), ATP17 (subunit f, part of the peripheral stalk), ATP18 (subunit i/j, part of the peripheral stalk). Dimer-specific subunits are ATP19 (subunit k, at interface between monomers), ATP20 (subunit g, at interface between monomers), TIM11 (subunit e, at interface between monomers). Also contains subunit L.

It is found in the mitochondrion inner membrane. In terms of biological role, mitochondrial membrane ATP synthase (F(1)F(0) ATP synthase or Complex V) produces ATP from ADP in the presence of a proton gradient across the membrane which is generated by electron transport complexes of the respiratory chain. F-type ATP synthases consist of two structural domains, F(1) - containing the extramembraneous catalytic core, and F(0) - containing the membrane proton channel, linked together by a central stalk and a peripheral stalk. During catalysis, ATP synthesis in the catalytic domain of F(1) is coupled via a rotary mechanism of the central stalk subunits to proton translocation. Part of the complex F(1) domain and the central stalk which is part of the complex rotary element. The gamma/ATP3 subunit protrudes into the catalytic domain formed of alpha/ATP1(3)beta/ATP2(3). Rotation of the central stalk against the surrounding alpha/ATP1(3)beta/ATP2(3) subunits leads to hydrolysis of ATP in three separate catalytic sites on the beta/ATP2 subunits. The sequence is that of ATP synthase subunit gamma, mitochondrial from Pichia angusta (Yeast).